The primary structure comprises 200 residues: NADH-quinone oxidoreductase subunit B (200 aa).

Residues Cys78, Cys79, Cys144, and Cys174 each coordinate [4Fe-4S] cluster.

It belongs to the complex I 20 kDa subunit family. In terms of assembly, NDH-1 is composed of 14 different subunits. Subunits NuoB, C, D, E, F, and G constitute the peripheral sector of the complex. The cofactor is [4Fe-4S] cluster.

Its subcellular location is the cell membrane. The catalysed reaction is a quinone + NADH + 5 H(+)(in) = a quinol + NAD(+) + 4 H(+)(out). Functionally, NDH-1 shuttles electrons from NADH, via FMN and iron-sulfur (Fe-S) centers, to quinones in the respiratory chain. The immediate electron acceptor for the enzyme in this species is believed to be ubiquinone. Couples the redox reaction to proton translocation (for every two electrons transferred, four hydrogen ions are translocated across the cytoplasmic membrane), and thus conserves the redox energy in a proton gradient. This chain is NADH-quinone oxidoreductase subunit B, found in Dehalococcoides mccartyi (strain ATCC BAA-2100 / JCM 16839 / KCTC 5957 / BAV1).